Here is a 94-residue protein sequence, read N- to C-terminus: Putative membrane protein insertion efficiency factor (94 aa).

This sequence belongs to the UPF0161 family.

It localises to the cell inner membrane. Could be involved in insertion of integral membrane proteins into the membrane. This Albidiferax ferrireducens (strain ATCC BAA-621 / DSM 15236 / T118) (Rhodoferax ferrireducens) protein is Putative membrane protein insertion efficiency factor.